The chain runs to 548 residues: Thermolysin (548 aa).

Residues 1–28 (MKMKMKLASFGLAAGLAAQVFLPYNALA) form the signal peptide. The propeptide at 29–232 (STEHVTWNQQ…DAAKPGDVKS (204 aa)) is activation peptide. Ca(2+) contacts are provided by Asp289, Asp291, Gln293, and Asp370. Position 374 (His374) interacts with Zn(2+). Glu375 is a catalytic residue. Residues His378 and Glu398 each contribute to the Zn(2+) site. 9 residues coordinate Ca(2+): Glu409, Asn415, Asp417, Glu419, Glu422, Tyr425, Thr426, Ile429, and Asp432. His463 acts as the Proton donor in catalysis.

Belongs to the peptidase M4 family. Requires Ca(2+) as cofactor. The cofactor is Zn(2+).

The protein resides in the secreted. The catalysed reaction is Preferential cleavage: Xaa-|-Leu &gt; Xaa-|-Phe.. Extracellular zinc metalloprotease. The polypeptide is Thermolysin (npr) (Bacillus thermoproteolyticus).